The sequence spans 53 residues: Antilisterial bacteriocin subtilosin biosynthesis protein AlbB (53 aa).

A run of 2 helical transmembrane segments spans residues 8–28 and 30–50; these read ILLY…FVKS and YLFT…ARKA.

Its subcellular location is the cell membrane. Its function is as follows. Involved in the production of the bacteriocin subtilosin. Required for maximal production and for optimal immunity to subtilosin. The sequence is that of Antilisterial bacteriocin subtilosin biosynthesis protein AlbB (albB) from Bacillus subtilis (strain 168).